A 740-amino-acid chain; its full sequence is DNA polymerase iota (740 aa).

The disordered stretch occupies residues 1-21 (MEKLGVEPEEEGGGDDDEEDA). The span at 7-21 (EPEEEGGGDDDEEDA) shows a compositional bias: acidic residues. The UmuC domain occupies 55–268 (IVHVDLDCFY…NHIKEIPGIG (214 aa)). 2 residues coordinate Mg(2+): Asp-59 and Leu-60. Positions 59 and 60 each coordinate Mn(2+). A 2'-deoxyribonucleoside 5'-triphosphate contacts are provided by Tyr-64 and Arg-96. A Mg(2+)-binding site is contributed by Asp-151. Asp-151 provides a ligand contact to Mn(2+). Glu-152 functions as the Proton acceptor in the catalytic mechanism. DNA-binding regions lie at residues 249–314 (ESCQ…FGED) and 325–439 (QSFS…CNLK). The Ubiquitin-binding 1 (UBM1) signature appears at 527 to 544 (VDQEVFKQLPVDIQEEIL). 2 disordered regions span residues 581 to 615 (PINPRDHLSSSKQVSSVSPCEPGTSGFNSSSSSYM) and 671 to 704 (NHTTDSHKQTVATDSHEGLTENREPDSVDEKITF). The span at 605-615 (SGFNSSSSSYM) shows a compositional bias: low complexity. The segment covering 672 to 702 (HTTDSHKQTVATDSHEGLTENREPDSVDEKI) has biased composition (basic and acidic residues). The Ubiquitin-binding 2 (UBM2) motif lies at 708–725 (IDPQVFYELPEAVQKELL).

The protein belongs to the DNA polymerase type-Y family. As to quaternary structure, interacts with POLH. Interacts with REV1. Interacts with ubiquitin. The cofactor is Mg(2+). It depends on Mn(2+) as a cofactor. In terms of processing, monoubiquitinated. Protein monoubiquitination prevents POLI binding to ubiquitin via the ubiquitin-binding motif 1 and ubiquitin-binding motif 2. In terms of tissue distribution, ubiquitous. Highly expressed in testis.

The protein localises to the nucleus. It carries out the reaction DNA(n) + a 2'-deoxyribonucleoside 5'-triphosphate = DNA(n+1) + diphosphate. Functionally, error-prone DNA polymerase specifically involved in DNA repair. Plays an important role in translesion synthesis, where the normal high-fidelity DNA polymerases cannot proceed and DNA synthesis stalls. Favors Hoogsteen base-pairing in the active site. Inserts the correct base with high-fidelity opposite an adenosine template. Exhibits low fidelity and efficiency opposite a thymidine template, where it will preferentially insert guanosine. May play a role in hypermutation of immunoglobulin genes. Forms a Schiff base with 5'-deoxyribose phosphate at abasic sites, but may not have lyase activity. The polypeptide is DNA polymerase iota (POLI) (Homo sapiens (Human)).